Consider the following 156-residue polypeptide: Ribosome maturation factor RimP (156 aa).

This sequence belongs to the RimP family.

The protein resides in the cytoplasm. Its function is as follows. Required for maturation of 30S ribosomal subunits. This Bacillus cereus (strain B4264) protein is Ribosome maturation factor RimP.